The following is a 240-amino-acid chain: Hairy and enhancer of split-related protein HELT (240 aa).

One can recognise a bHLH domain in the interval 10–65; it reads RTPVSHKVIEKRRRDRINRCLNELGKTVPMALAKQSSGKLEKAEILEMTVQYLRAL. N6-acetyllysine is present on Lys48. Residues 86–121 enclose the Orange domain; sequence FHYGYHECMKNLVHYLTTVERMETKDTKYARILAFL.

The protein belongs to the HEY family. Self-associates. Interacts with HES5 and HEY2. Expressed in heart and testis.

It is found in the nucleus. In terms of biological role, transcriptional repressor which binds preferentially to the canonical E box sequence 5'-CACGCG-3'. Required for the development of GABAergic neurons. This chain is Hairy and enhancer of split-related protein HELT (Helt), found in Mus musculus (Mouse).